Here is an 88-residue protein sequence, read N- to C-terminus: MGGISITQLLIIASIVVVLFGTKKLRGLGSDLGASIKGFKKSMSEDDNTTSTSSDKSSQDADFTAPPIEPKANLACPDEAKNKDKEHV.

The chain crosses the membrane as a helical span at residues 1-21; the sequence is MGGISITQLLIIASIVVVLFG. Residues 39-88 are disordered; it reads FKKSMSEDDNTTSTSSDKSSQDADFTAPPIEPKANLACPDEAKNKDKEHV. The segment covering 49 to 62 has biased composition (low complexity); that stretch reads TTSTSSDKSSQDAD. A compositionally biased stretch (basic and acidic residues) spans 78-88; the sequence is DEAKNKDKEHV.

This sequence belongs to the TatA/E family. In terms of assembly, the Tat system comprises two distinct complexes: a TatABC complex, containing multiple copies of TatA, TatB and TatC subunits, and a separate TatA complex, containing only TatA subunits. Substrates initially bind to the TatABC complex, which probably triggers association of the separate TatA complex to form the active translocon.

It localises to the cell inner membrane. Functionally, part of the twin-arginine translocation (Tat) system that transports large folded proteins containing a characteristic twin-arginine motif in their signal peptide across membranes. TatA could form the protein-conducting channel of the Tat system. This chain is Sec-independent protein translocase protein TatA, found in Sodalis glossinidius (strain morsitans).